We begin with the raw amino-acid sequence, 381 residues long: Anhydro-N-acetylmuramic acid kinase (381 aa).

Glycine 13–aspartate 20 serves as a coordination point for ATP.

This sequence belongs to the anhydro-N-acetylmuramic acid kinase family.

The enzyme catalyses 1,6-anhydro-N-acetyl-beta-muramate + ATP + H2O = N-acetyl-D-muramate 6-phosphate + ADP + H(+). Its pathway is amino-sugar metabolism; 1,6-anhydro-N-acetylmuramate degradation. The protein operates within cell wall biogenesis; peptidoglycan recycling. Its function is as follows. Catalyzes the specific phosphorylation of 1,6-anhydro-N-acetylmuramic acid (anhMurNAc) with the simultaneous cleavage of the 1,6-anhydro ring, generating MurNAc-6-P. Is required for the utilization of anhMurNAc either imported from the medium or derived from its own cell wall murein, and thus plays a role in cell wall recycling. The sequence is that of Anhydro-N-acetylmuramic acid kinase from Francisella tularensis subsp. novicida (strain U112).